The sequence spans 365 residues: Elongation factor Tu (365 aa).

GTP is bound by residues 1–7, 62–66, and 117–120; these read HVDHGKT, DCPGH, and NKCD. The region spanning 1-185 is the tr-type G domain; it reads HVDHGKTTLT…TLDSYIPTPE (185 aa). Thr7 is a Mg(2+) binding site.

It belongs to the TRAFAC class translation factor GTPase superfamily. Classic translation factor GTPase family. EF-Tu/EF-1A subfamily. In terms of assembly, monomer.

Its subcellular location is the cytoplasm. It catalyses the reaction GTP + H2O = GDP + phosphate + H(+). Functionally, GTP hydrolase that promotes the GTP-dependent binding of aminoacyl-tRNA to the A-site of ribosomes during protein biosynthesis. In Buchnera aphidicola subsp. Schlechtendalia chinensis, this protein is Elongation factor Tu.